Reading from the N-terminus, the 261-residue chain is Acetylglutamate kinase (261 aa).

Residues 46 to 47 (GG), Arg68, and Asn160 contribute to the substrate site.

Belongs to the acetylglutamate kinase family. ArgB subfamily.

Its subcellular location is the cytoplasm. It carries out the reaction N-acetyl-L-glutamate + ATP = N-acetyl-L-glutamyl 5-phosphate + ADP. Its pathway is amino-acid biosynthesis; L-arginine biosynthesis; N(2)-acetyl-L-ornithine from L-glutamate: step 2/4. In terms of biological role, catalyzes the ATP-dependent phosphorylation of N-acetyl-L-glutamate. The chain is Acetylglutamate kinase from Shewanella loihica (strain ATCC BAA-1088 / PV-4).